We begin with the raw amino-acid sequence, 216 residues long: Small ribosomal subunit protein uS3 (216 aa).

The KH type-2 domain occupies 38–108 (LREFVKKKLH…DLAIDIQEVK (71 aa)).

The protein belongs to the universal ribosomal protein uS3 family. As to quaternary structure, part of the 30S ribosomal subunit. Forms a tight complex with proteins S10 and S14.

In terms of biological role, binds the lower part of the 30S subunit head. Binds mRNA in the 70S ribosome, positioning it for translation. This chain is Small ribosomal subunit protein uS3, found in Desulfosudis oleivorans (strain DSM 6200 / JCM 39069 / Hxd3) (Desulfococcus oleovorans).